A 312-amino-acid chain; its full sequence is Aquaglyceroporin-2 (312 aa).

6 helical membrane passes run 78 to 98 (FLGNFVLIYIAKGAVITSLLV), 104 to 124 (LGLTIGIGVAVTMALYVSLGI), 151 to 171 (YIAAQMLGTFLGAACAYGVFA), 203 to 223 (GIFYPIFAELISTAVLLLCVC), 239 to 259 (VAIGALVFVMVNNFGLASPLA), and 286 to 306 (YYFWVPLVVPFFGAILGLFLY).

This sequence belongs to the MIP/aquaporin (TC 1.A.8) family.

It is found in the membrane. The enzyme catalyses glycerol(in) = glycerol(out). It catalyses the reaction H2O(in) = H2O(out). It carries out the reaction urea(in) = urea(out). In terms of biological role, mediates water and glycerol transport across cell membranes. Permeable to urea. Permeable to methylamine/methylammonium. Permeable to dihydroxyacetone. The polypeptide is Aquaglyceroporin-2 (Trypanosoma brucei brucei).